Consider the following 179-residue polypeptide: Large ribosomal subunit protein uL5 (179 aa).

The protein belongs to the universal ribosomal protein uL5 family. As to quaternary structure, part of the 50S ribosomal subunit; part of the 5S rRNA/L5/L18/L25 subcomplex. Contacts the 5S rRNA and the P site tRNA. Forms a bridge to the 30S subunit in the 70S ribosome.

Functionally, this is one of the proteins that bind and probably mediate the attachment of the 5S RNA into the large ribosomal subunit, where it forms part of the central protuberance. In the 70S ribosome it contacts protein S13 of the 30S subunit (bridge B1b), connecting the 2 subunits; this bridge is implicated in subunit movement. Contacts the P site tRNA; the 5S rRNA and some of its associated proteins might help stabilize positioning of ribosome-bound tRNAs. This Pasteurella multocida (strain Pm70) protein is Large ribosomal subunit protein uL5.